The chain runs to 165 residues: Anaphase-promoting complex subunit 11 (165 aa).

An RING-type; atypical zinc finger spans residues 52-95; sequence CPSCKFPGDQCPLVIGLCHHNFHDHCIYRWLDTPTSKGLCPMCR.

In terms of assembly, the APC/C is composed of at least 13 subunits that stay tightly associated throughout the cell cycle: APC1, APC2, APC4, APC5, APC9, APC11, CDC16, CDC23, CDC26, CDC27, DOC1, MND2 and SWM1.

It participates in protein modification; protein ubiquitination. Functionally, probably catalytic subunit of the anaphase promoting complex/cyclosome (APC/C), a cell cycle-regulated E3 ubiquitin-protein ligase complex that controls progression through mitosis and the G1 phase of the cell cycle. The APC/C is thought to confer substrate specificity and, in the presence of ubiquitin-conjugating E2 enzymes, it catalyzes the formation of protein-ubiquitin conjugates that are subsequently degraded by the 26S proteasome. In early mitosis, the APC/C is activated by CDC20 and targets securin PDS1, the B-type cyclin CLB5, and other anaphase inhibitory proteins for proteolysis, thereby triggering the separation of sister chromatids at the metaphase-to-anaphase transition. In late mitosis and in G1, degradation of CLB5 allows activation of the APC/C by CDH1, which is needed to destroy CDC20 and the B-type cyclin CLB2 to allow exit from mitosis and creating the low CDK state necessary for cytokinesis and for reforming prereplicative complexes in G1 prior to another round of replication. APC11 is required to recruit the ubiquitin-conjugating enzyme E2 to the APC/C. The sequence is that of Anaphase-promoting complex subunit 11 (APC11) from Saccharomyces cerevisiae (strain ATCC 204508 / S288c) (Baker's yeast).